Reading from the N-terminus, the 274-residue chain is Large ribosomal subunit protein uL2 (274 aa).

The segment at 223–274 (VVMNPVDHPHGGGEGRTSGGRHPVSPWGVPTKGYKTRSNKRTDKYIVRRRNK) is disordered.

The protein belongs to the universal ribosomal protein uL2 family. As to quaternary structure, part of the 50S ribosomal subunit. Forms a bridge to the 30S subunit in the 70S ribosome.

In terms of biological role, one of the primary rRNA binding proteins. Required for association of the 30S and 50S subunits to form the 70S ribosome, for tRNA binding and peptide bond formation. It has been suggested to have peptidyltransferase activity; this is somewhat controversial. Makes several contacts with the 16S rRNA in the 70S ribosome. The chain is Large ribosomal subunit protein uL2 from Vibrio cholerae serotype O1 (strain M66-2).